Consider the following 278-residue polypeptide: 3-oxoacyl-[acyl-carrier-protein] reductase (278 aa).

Residues Thr13, Arg14, Ile16, Ser36, Ser40, Thr44, Asp66, Phe67, Glu77, Gly122, Gln125, and Glu126 each coordinate NADP(+). The Proton donor role is filled by Ser182. NADP(+)-binding residues include Tyr198, Lys202, Leu230, and Val231. The active-site Proton acceptor is Tyr198. Residue Lys202 is the Lowers pKa of active site Tyr of the active site.

It belongs to the short-chain dehydrogenases/reductases (SDR) family.

The protein localises to the mitochondrion. It carries out the reaction a (3R)-hydroxyacyl-[ACP] + NADP(+) = a 3-oxoacyl-[ACP] + NADPH + H(+). It participates in lipid metabolism; fatty acid biosynthesis. Its function is as follows. Involved in biosynthesis of fatty acids in mitochondria. This is 3-oxoacyl-[acyl-carrier-protein] reductase (OAR1) from Saccharomyces cerevisiae (strain ATCC 204508 / S288c) (Baker's yeast).